Here is a 288-residue protein sequence, read N- to C-terminus: Eukaryotic translation initiation factor 3 subunit G (288 aa).

A disordered region spans residues 1–35 (MSRVANNRDWADDEDLEDSNELPQSTTTTNKDGTQ). Residues 11-20 (ADDEDLEDSN) show a composition bias toward acidic residues. Residues 21–35 (ELPQSTTTTNKDGTQ) show a composition bias toward polar residues. In terms of domain architecture, RRM spans 208–286 (ATLRVTNVSE…LILRVEFAKK (79 aa)).

This sequence belongs to the eIF-3 subunit G family. As to quaternary structure, component of the eukaryotic translation initiation factor 3 (eIF-3) complex.

It is found in the cytoplasm. Its function is as follows. RNA-binding component of the eukaryotic translation initiation factor 3 (eIF-3) complex, which is involved in protein synthesis of a specialized repertoire of mRNAs and, together with other initiation factors, stimulates binding of mRNA and methionyl-tRNAi to the 40S ribosome. The eIF-3 complex specifically targets and initiates translation of a subset of mRNAs involved in cell proliferation. This subunit can bind 18S rRNA. This chain is Eukaryotic translation initiation factor 3 subunit G (tif35), found in Botryotinia fuckeliana (strain B05.10) (Noble rot fungus).